The chain runs to 329 residues: Biotin synthase (329 aa).

One can recognise a Radical SAM core domain in the interval 38–262; that stretch reads NTIQVSTLLS…IMPHSYIRLS (225 aa). The [4Fe-4S] cluster site is built by Cys53, Cys57, and Cys60. [2Fe-2S] cluster-binding residues include Cys97, Cys128, Cys188, and Arg260.

This sequence belongs to the radical SAM superfamily. Biotin synthase family. Homodimer. The cofactor is [4Fe-4S] cluster. [2Fe-2S] cluster is required as a cofactor.

It catalyses the reaction (4R,5S)-dethiobiotin + (sulfur carrier)-SH + 2 reduced [2Fe-2S]-[ferredoxin] + 2 S-adenosyl-L-methionine = (sulfur carrier)-H + biotin + 2 5'-deoxyadenosine + 2 L-methionine + 2 oxidized [2Fe-2S]-[ferredoxin]. It functions in the pathway cofactor biosynthesis; biotin biosynthesis; biotin from 7,8-diaminononanoate: step 2/2. Its function is as follows. Catalyzes the conversion of dethiobiotin (DTB) to biotin by the insertion of a sulfur atom into dethiobiotin via a radical-based mechanism. The polypeptide is Biotin synthase (Acinetobacter baumannii (strain ACICU)).